Reading from the N-terminus, the 86-residue chain is Putative defensin-like protein 9 (86 aa).

A signal peptide spans 1–29 (MKSSMQLISTLFFLVILVVAPGMKMVVEG). Gln-30 bears the Pyrrolidone carboxylic acid mark. 4 cysteine pairs are disulfide-bonded: Cys-34-Cys-79, Cys-45-Cys-65, Cys-51-Cys-73, and Cys-55-Cys-75.

It belongs to the DEFL family.

The protein resides in the secreted. This Arabidopsis thaliana (Mouse-ear cress) protein is Putative defensin-like protein 9 (LCR76).